The sequence spans 128 residues: Nascent polypeptide-associated complex protein (128 aa).

The 68-residue stretch at 8 to 75 (PRMLKKMQKM…PKKIKKEKVE (68 aa)) folds into the NAC-A/B domain.

It belongs to the NAC-alpha family. In terms of assembly, homodimer. Interacts with the ribosome. Binds ribosomal RNA.

Functionally, contacts the emerging nascent chain on the ribosome. In Methanocaldococcus jannaschii (strain ATCC 43067 / DSM 2661 / JAL-1 / JCM 10045 / NBRC 100440) (Methanococcus jannaschii), this protein is Nascent polypeptide-associated complex protein.